The primary structure comprises 603 residues: O-acetyltransferase OatA (603 aa).

A run of 11 helical transmembrane segments spans residues 17 to 37 (YLPG…IYHL), 45 to 65 (GFLG…SLLI), 87 to 107 (LIPA…IFKP), 148 to 168 (LWSL…ITFL), 177 to 197 (IIQT…VIHF), 211 to 231 (TRLQ…PFAL), 239 to 259 (IVVS…TLFF), 268 to 288 (IYNG…AIAV), 311 to 331 (YSLY…YVQG), 333 to 353 (IPVY…EISY), and 382 to 402 (VLVI…FDAL). Active-site residues include Ser453, Asp575, and His578.

The protein belongs to the acyltransferase 3 family. As to quaternary structure, monomer.

The protein localises to the cell membrane. Its function is as follows. Responsible for O-acetylation at the C(6)-hydroxyl group of N-acetylmuramyl residues, forming the corresponding N,6-O-diacetylmuramic acid of the peptidoglycan. O-acetylation of the peptidoglycan is the major determinant for lysozyme resistance. The chain is O-acetyltransferase OatA from Staphylococcus aureus (strain NCTC 8325 / PS 47).